We begin with the raw amino-acid sequence, 238 residues long: MVHQLIAEFMGTALMIIFGVGVHCSSVLKGTKYRGSGHIFAITTWGFGISVALFIFGNVCINPAMVLAQCLLGNIAWSLFIPYSVAEVLGGVVGSVIVWIMYADHFKASTDEISPITIRNLFCTAPAVRNLPRNFFVELFDTFIFISGILAISEIKTPGIVPIGVGLLVWAIGMGLGGPTGFAMNLARDMGPRIAHAILPIANKADSDWQYGIIVPGIAPFVGAAIAAWFMHGFFGIN.

2 consecutive transmembrane segments (helical) span residues 2-22 and 39-59; these read VHQL…GVGV and IFAI…FGNV. An NPA 1 motif is present at residues 62–64; it reads NPA. Transmembrane regions (helical) follow at residues 80-100, 135-155, and 158-178; these read FIPY…IVWI, FFVE…ISEI, and PGIV…GLGG. An NPA 2 motif is present at residues 185 to 187; the sequence is NLA. Residues 211–231 form a helical membrane-spanning segment; the sequence is YGIIVPGIAPFVGAAIAAWFM.

Belongs to the MIP/aquaporin (TC 1.A.8) family.

Its subcellular location is the cell membrane. Functionally, transporter that facilitates the transmembrane diffusion of D/L-lactic acid. Is involved in the cellular racemization of lactate and lactate metabolism. The transported molecule is indeed lactic acid and not the lactate anion, in agreement with the assumption that, with very few exceptions, MIPs (major intrinsic proteins) only facilitate the transport of uncharged solutes. Also facilitates urea and H(2)O(2) diffusion across membranes, but is not permeable to water, glycerol and dihydroxyacetone. This chain is D/L-lactic acid transporter, found in Lactiplantibacillus plantarum (strain ATCC BAA-793 / NCIMB 8826 / WCFS1) (Lactobacillus plantarum).